The sequence spans 464 residues: Kynurenine 3-monooxygenase (464 aa).

This sequence belongs to the aromatic-ring hydroxylase family. KMO subfamily. The cofactor is FAD.

It catalyses the reaction L-kynurenine + NADPH + O2 + H(+) = 3-hydroxy-L-kynurenine + NADP(+) + H2O. It participates in cofactor biosynthesis; NAD(+) biosynthesis; quinolinate from L-kynurenine: step 1/3. In terms of biological role, catalyzes the hydroxylation of L-kynurenine (L-Kyn) to form 3-hydroxy-L-kynurenine (L-3OHKyn). Required for synthesis of quinolinic acid. The sequence is that of Kynurenine 3-monooxygenase from Myxococcus xanthus (strain DK1622).